A 75-amino-acid polypeptide reads, in one-letter code: Kappa-thalatoxin-Tas2a (75 aa).

The N-terminal stretch at 1 to 22 (MKFQMIAAVLLIAFCLSVVVTA) is a signal peptide. Positions 23–40 (RMELQDDEEMKNGSFQKR) are excised as a propeptide. The ShKT domain occupies 43-75 (CIDTIPKSRCTAFQCKHSMKYRLSFCRKTCGTC). 3 cysteine pairs are disulfide-bonded: C43-C75, C52-C68, and C57-C72.

The protein belongs to the sea anemone type 1 potassium channel toxin family. Type 1a subfamily.

The protein localises to the secreted. It is found in the nematocyst. Its function is as follows. Inhibits voltage-gated potassium channels (Kv) with higher potency for Kv1.1/KCNA1 and Kv1.3/KCNA3 (IC(50)=3.4 nM). The chain is Kappa-thalatoxin-Tas2a from Thalassianthus aster (Fuzzy-tipped anemone).